The sequence spans 1029 residues: mRNA 3'-end-processing protein rna14 (1029 aa).

Disordered regions lie at residues 1 to 177 (MAEE…PDVS) and 225 to 251 (GNVQDSATATPTPDSPSTSKGRLPHDR). The segment covering 21–32 (VDYKAVEEHGAD) has biased composition (basic and acidic residues). 2 stretches are compositionally biased toward polar residues: residues 43–79 (KTLQDQYSSSMTDLKQSENVSSSASPEPNPTEQNSVQ) and 104–119 (TSTMVPTSGTSVQPKT). Positions 127–140 (VEDEDEDDAGDADY) are enriched in acidic residues. Polar residues predominate over residues 153-175 (TVATNVPQQSVSGNENEASSTPD). Residues 229 to 243 (DSATATPTPDSPSTS) show a composition bias toward low complexity. HAT repeat units lie at residues 281-313 (NRFDSARDVFERFLKVFPFAAEQWVAYAKMESE), 315-346 (NDLYRLEQIFNRTLLTIPDVQLWSVYLDYVRR), 357-392 (QARRIISSAYELAFQHIGVDKDSGSIWSDYVQFIKS), 406-439 (QKMDLLRKAYQKAICVPTQAVNTLWKEYDQFEMG), 469-509 (ITRD…WEKG), and 521-553 (AFKGRVVYVYKQALMALRFLPEMWFDAAEFCFL). 3 disordered regions span residues 634–664 (TFAKMNADNPPAKTDDDDDDQSESKARESVK), 853–951 (TAVR…GSPA), and 996–1023 (IPLPQSARGLGTTQTPMQPFSGKASPSL). The span at 894–908 (SPKRPLEDFDDDYNR) shows a compositional bias: basic and acidic residues. Polar residues-rich tracts occupy residues 932–949 (RSQLSNVQTGSQFRSQGS) and 1006–1023 (GTTQTPMQPFSGKASPSL).

The protein resides in the nucleus. Its subcellular location is the cytoplasm. In terms of biological role, component of the cleavage factor IA (CFIA) complex, which is involved in the endonucleolytic cleavage during polyadenylation-dependent pre-mRNA 3'-end formation. The sequence is that of mRNA 3'-end-processing protein rna14 (rna14) from Aspergillus fumigatus (strain ATCC MYA-4609 / CBS 101355 / FGSC A1100 / Af293) (Neosartorya fumigata).